The sequence spans 389 residues: MSRMENNKVTISVIKADVGGLCGHTLAPDELLEACEAVLEEAVDEIILDYYVTRCGDDIDLIMSHKLGCDNEKVHGLAWRAFEEATKVAKELKLYGAGQDLLADSFSGNVRGMGPGCAEMEFVERKSEPIVVFCCDKTDPTAFNYPLFKMFADPFNTAGLVFDPSMISGFKFEVHDVVGHKKVFLDTPEEMYMLLALIGDYEKYAIKRVYRRRDNEIAAVVSTEKLNYIAGEYVGKDDPVAIVRAQSGFPAVGEVLEPFANPHFVPGWMRGSHWGPLMPVGEEDATPTRFDGPARIIALGFQVCDGMLIGPNDLFADKGFDKAREKALEMADIIRRMGPFQPHRLPATMMEYTTVPKVLEALEDRFIPLEGLELIEEGGITRKDRGDVE.

D17 serves as the catalytic Proton acceptor; for FBP phosphatase activity. Positions 17, 24, 57, and 58 each coordinate Mg(2+). H24 contacts beta-D-fructose 1,6-bisphosphate. H24 provides a ligand contact to dihydroxyacetone phosphate. Y95 contributes to the beta-D-fructose 1,6-bisphosphate binding site. Q99 contributes to the Mg(2+) binding site. 108-109 contacts beta-D-fructose 1,6-bisphosphate; sequence GN. D136 is a Mg(2+) binding site. K137 provides a ligand contact to beta-D-fructose 1,6-bisphosphate. K137 provides a ligand contact to dihydroxyacetone phosphate. The active-site Proton donor/acceptor; for FBP aldolase activity is Y233. Residues K236, D237, and D238 each coordinate Mg(2+). The active-site Schiff-base intermediate with DHAP; for FBP aldolase activity is K236. Beta-D-fructose 1,6-bisphosphate-binding positions include 246–247, R270, D291, and Y352; that span reads QS. Dihydroxyacetone phosphate is bound by residues R270 and D291.

It belongs to the FBP aldolase/phosphatase family. Homooctamer; dimer of tetramers. The cofactor is Mg(2+).

It carries out the reaction beta-D-fructose 1,6-bisphosphate + H2O = beta-D-fructose 6-phosphate + phosphate. It catalyses the reaction beta-D-fructose 1,6-bisphosphate = D-glyceraldehyde 3-phosphate + dihydroxyacetone phosphate. It participates in carbohydrate biosynthesis; gluconeogenesis. In terms of biological role, catalyzes two subsequent steps in gluconeogenesis: the aldol condensation of dihydroxyacetone phosphate (DHAP) and glyceraldehyde-3-phosphate (GA3P) to fructose-1,6-bisphosphate (FBP), and the dephosphorylation of FBP to fructose-6-phosphate (F6P). The protein is Fructose-1,6-bisphosphate aldolase/phosphatase of Methanocaldococcus jannaschii (strain ATCC 43067 / DSM 2661 / JAL-1 / JCM 10045 / NBRC 100440) (Methanococcus jannaschii).